The chain runs to 56 residues: Large ribosomal subunit protein bL32 (56 aa).

Residues 1 to 21 form a disordered region; it reads MAVQKNKPTRSKRGMRRSHDA. Over residues 7-16 the composition is skewed to basic residues; that stretch reads KPTRSKRGMR.

It belongs to the bacterial ribosomal protein bL32 family.

The polypeptide is Large ribosomal subunit protein bL32 (Hamiltonella defensa subsp. Acyrthosiphon pisum (strain 5AT)).